A 488-amino-acid chain; its full sequence is Glutamyl-tRNA(Gln) amidotransferase subunit A (488 aa).

Residues Lys77 and Ser152 each act as charge relay system in the active site. The active-site Acyl-ester intermediate is the Ser176.

It belongs to the amidase family. GatA subfamily. Heterotrimer of A, B and C subunits.

It catalyses the reaction L-glutamyl-tRNA(Gln) + L-glutamine + ATP + H2O = L-glutaminyl-tRNA(Gln) + L-glutamate + ADP + phosphate + H(+). Its function is as follows. Allows the formation of correctly charged Gln-tRNA(Gln) through the transamidation of misacylated Glu-tRNA(Gln) in organisms which lack glutaminyl-tRNA synthetase. The reaction takes place in the presence of glutamine and ATP through an activated gamma-phospho-Glu-tRNA(Gln). This Streptococcus pyogenes serotype M4 (strain MGAS10750) protein is Glutamyl-tRNA(Gln) amidotransferase subunit A.